A 1483-amino-acid polypeptide reads, in one-letter code: MSENNSHNLDEHESHSENSDYMMDTQVEDDYDEDGHVQGEYSYYPDEDEDEHMLSSVGSFEADDGEDDDNDYHHEDDSGLLYGYHRTQNGSDEDRNEEEDGLERSHDNNEFGSNPLHLPDILETFAQRLEQRRQTSEGLGQHPVGRTLPEILSMIGGRMERSAESSARNERISKLIENTGNASEDPYIAMESLKELSENILMMNQMVVDRIIPMETLIGNIAAILSDKILREELELQMQACRCMYNLFEVCPESISIAVDEHVIPILQGKLVEISYIDLAEQVLETVEYISRVHGRDILKTGQLSIYVQFFDFLTIHAQRKAIAIVSNACSSIRTDDFKTIVEVLPTLKPIFSNATDQPILTRLVNAMYGICGALHGVDKFETLFSLDLIERIVQLVSIQDTPLENKLKCLDILTVLAMSSDVLSRELREKTDIVDMATRSFQHYSKSPNAGLHETLIYVPNSLLISISRFIVVLFPPEDERILSADKYTGNSDRGVISNQEKFDSLVQCLIPILVEIYTNAADFDVRRYVLIALLRVVSCINNSTAKAINDQLIKLIGSILAQKETASNANGTYSSEAGTLLVGGLSLLDLICKKFSELFFPSIKREGIFDLVKDLSVDFNNIDLKEDGNENISLSDEEGDLHSSIEECDEGDEEYDYEFTDMEIPDSVKPKKISIHIFRTLSLAYIKNKGVNLVNRVLSQMNVEQEAITEELHQIEGVVSILENPSTPDKTEEDWKGIWSVLKKCIFHEDFDVSGFEFTSTGLASSITKRITSSTVSHFILAKSFLEVFEDCIDRFLEILQSALTRLENFSIVDCGLHDGGGVSSLAKEIKIKLVYDGDASKDNIGTDLSSTIVSVHCIASFTSLNEFLRHRMVRMRFLNSLIPNLTSSSTEADREEEENCLDHMRKKNFDFFYDNEKVDMESTVFGVIFNTFVRRNRDLKTLWDDTHTIKFCKSLEGNNRESEAAEEANEGKKLRDFYKKREFAQVDTGSSADILTLLDFLHSCGVKSDSFINSKLSAKLARQLDEPLVVASGALPDWSLFLTRRFPFLFPFDTRMLFLQCTSFGYGRLIQLWKNKSKGSKDLRNDEALQQLGRITRRKLRISRKTIFATGLKILSKYGSSPDVLEIEYQEEAGTGLGPTLEFYSVVSKYFARKSLNMWRCNSYSYRSEMDVDTTDDYITTLLFPEPLNPFSNNEKVIELFGYLGTFVARSLLDNRILDFRFSKVFFELLHRMSTPNVTTVPSDVETCLLMIELVDPLLAKSLKYIVANKDDNMTLESLSLTFTVPGNDDIELIPGGCNKSLNSSNVEEYIHGVIDQILGKGIEKQLKAFIEGFSKVFSYERMLILFPDELVDIFGRVEEDWSMATLYTNLNAEHGYTMDSSIIHDFISIISAFGKHERRLFLQFLTGSPKLPIGGFKSLNPKFTVVLKHAEDGLTADEYLPSVMTCANYLKLPKYTSKDIMRSRLCQAIEEGAGAFLLS.

The disordered stretch occupies residues 1-117 (MSENNSHNLD…NNEFGSNPLH (117 aa)). Residues 8-18 (NLDEHESHSEN) show a composition bias toward basic and acidic residues. Positions 61-70 (EADDGEDDDN) are enriched in acidic residues. Phosphothreonine is present on Thr-87. Lys-349 participates in a covalent cross-link: Glycyl lysine isopeptide (Lys-Gly) (interchain with G-Cter in ubiquitin). A K-box region spans residues 1007 to 1081 (CGVKSDSFIN…LIQLWKNKSK (75 aa)). Residues 1376 to 1483 (AEHGYTMDSS…EEGAGAFLLS (108 aa)) enclose the HECT domain. The active-site Glycyl thioester intermediate is the Cys-1450.

The protein belongs to the UPL family. K-HECT subfamily.

The enzyme catalyses S-ubiquitinyl-[E2 ubiquitin-conjugating enzyme]-L-cysteine + [acceptor protein]-L-lysine = [E2 ubiquitin-conjugating enzyme]-L-cysteine + N(6)-ubiquitinyl-[acceptor protein]-L-lysine.. In terms of biological role, E3 ubiquitin-protein ligase which accepts ubiquitin from an E2 ubiquitin-conjugating enzyme in the form of a thioester and then directly transfers the ubiquitin to targeted substrates. In Saccharomyces cerevisiae (strain ATCC 204508 / S288c) (Baker's yeast), this protein is Ubiquitin fusion degradation protein 4 (UFD4).